Here is a 158-residue protein sequence, read N- to C-terminus: Transcriptional repressor NrdR (158 aa).

A zinc finger spans residues 3–34; sequence CPSCQNTDSRVLESRAADAGRSVRRRRECLHC. The region spanning 49–139 is the ATP-cone domain; sequence ITVLKRNGNR…VYRHFRGIND (91 aa).

This sequence belongs to the NrdR family. Zn(2+) is required as a cofactor.

Functionally, negatively regulates transcription of bacterial ribonucleotide reductase nrd genes and operons by binding to NrdR-boxes. This Prochlorococcus marinus (strain MIT 9303) protein is Transcriptional repressor NrdR.